The primary structure comprises 877 residues: EF-hand domain-containing family member B (877 aa).

2 disordered regions span residues 1–47 and 268–290; these read MCSF…GRKS and AQQP…PDRI. 2 EF-hand domains span residues 605-640 and 641-676; these read QNFD…ACLH and LDEK…KDKT. Ca(2+) contacts are provided by D618, D622, E629, D654, D656, D658, and E665.

Microtubule inner protein component of sperm flagellar doublet microtubules. Interacts with STIM1 and ORAI1; the interactions take place upon Ca(2+)-store depletion and dissociate through a Ca(2+)-dependent mechanism. Interaction with STIM1 inhibits STIM1 interaction with SARAF. As to expression, expressed in trachea multiciliated cells.

The protein localises to the cytoplasm. Its subcellular location is the cytoskeleton. The protein resides in the cilium axoneme. It is found in the flagellum axoneme. Functionally, microtubule inner protein (MIP) part of the dynein-decorated doublet microtubules (DMTs) in cilia axoneme, which is required for motile cilia beating. Cytosolic sensor for calcium, modulates the interaction of STIM1 and ORAI1 upon store depletion and the activation of store-operated Ca(2+) entry (SOCE) and NFAT translocation from cytosol to nucleus. This is EF-hand domain-containing family member B from Bos taurus (Bovine).